The following is a 145-amino-acid chain: 3-dehydroquinate dehydratase (145 aa).

Residue Y22 is the Proton acceptor of the active site. Substrate contacts are provided by N73, H79, and D86. H99 (proton donor) is an active-site residue. Substrate is bound by residues 100-101 and R110; that span reads LS.

This sequence belongs to the type-II 3-dehydroquinase family. As to quaternary structure, homododecamer.

It carries out the reaction 3-dehydroquinate = 3-dehydroshikimate + H2O. The protein operates within metabolic intermediate biosynthesis; chorismate biosynthesis; chorismate from D-erythrose 4-phosphate and phosphoenolpyruvate: step 3/7. Functionally, catalyzes a trans-dehydration via an enolate intermediate. This is 3-dehydroquinate dehydratase from Prochlorococcus marinus (strain NATL1A).